The chain runs to 167 residues: Ribosome maturation factor RimM (167 aa).

One can recognise a PRC barrel domain in the interval 92-165 (EDTYYIADII…RITIDPIEGM (74 aa)).

It belongs to the RimM family. In terms of assembly, binds ribosomal protein uS19.

It localises to the cytoplasm. An accessory protein needed during the final step in the assembly of 30S ribosomal subunit, possibly for assembly of the head region. Essential for efficient processing of 16S rRNA. May be needed both before and after RbfA during the maturation of 16S rRNA. It has affinity for free ribosomal 30S subunits but not for 70S ribosomes. This chain is Ribosome maturation factor RimM, found in Alkaliphilus oremlandii (strain OhILAs) (Clostridium oremlandii (strain OhILAs)).